The primary structure comprises 418 residues: Serine/threonine-protein kinase PCRK1 (418 aa).

The disordered stretch occupies residues 36-63 (GSEFNSRDVSGTSTESSMGRKNSYPPVS). Residues 84–369 (FSRSVMIGEG…EVLEMVNKIV (286 aa)) form the Protein kinase domain. Residues 90–98 (IGEGGFGCV) and Lys118 contribute to the ATP site. The active-site Proton acceptor is Asp218. 3 positions are modified to phosphoserine: Ser373, Ser377, and Ser385.

This sequence belongs to the protein kinase superfamily. Ser/Thr protein kinase family. As to quaternary structure, interacts with FLS2.

Its subcellular location is the cell membrane. The catalysed reaction is L-seryl-[protein] + ATP = O-phospho-L-seryl-[protein] + ADP + H(+). It carries out the reaction L-threonyl-[protein] + ATP = O-phospho-L-threonyl-[protein] + ADP + H(+). Involved in the activation of early immune responses. Plays a role in pattern-triggered immunity (PTI) induced by pathogen-associated molecular patterns (PAMPs) and damage-associated molecular patterns (DAMPs). Contributes to PTI in response to the bacterial pathogen Pseudomonas syringae pv maculicola strain ES4326. Contributes to PTI in response to the bacterial pathogen Pseudomonas syringae pv tomato strain DC3000. Functions redundantly with PCRK2 in basal resistance against bacterial pathogens and in regulation of plant immunity. Functions together with PCRK2 downstream of the PAMP receptor FLS2. Contributes to the induction of SARD1 and CBP60G, which are transcriptional activator of ICS1, an enzyme involved in salicylate (SA) biosynthesis upon pathogen attack. The sequence is that of Serine/threonine-protein kinase PCRK1 from Arabidopsis thaliana (Mouse-ear cress).